The following is a 198-amino-acid chain: Bcl-2-like protein 11 (198 aa).

Positions 1–72 (MAKQPSDVSS…PLAPPASPGP (72 aa)) are disordered. The residue at position 69 (Ser-69) is a Phosphoserine; by MAPK. Residues Ser-77, Ser-87, and Ser-94 each carry the phosphoserine modification. The BH3 signature appears at 148 to 162 (IAQELRRIGDEFNAY).

This sequence belongs to the Bcl-2 family. As to quaternary structure, forms heterodimers with a number of antiapoptotic Bcl-2 proteins, including MCL1, BCL2, BCL2L1 isoform Bcl-X(L), BCL2A1/BFL-1, BHRF1, and BCL2L2/BCLW. Does not heterodimerize with proapoptotic proteins such as BAD, BOK or BAK. Identified in a complex containing BCL2L11, DYNLL1 and BCL2L1 isoform Bcl-X(L); BH3 integrity is required for BCL2L1-binding. Interacts with YWHAZ. When phosphorylated, interacts with TRIM2; this interaction is associated with ubiquitination and degradation. Interacts with MCL1; may sequester BCL2L11 to prevent its pro-apoptotic activity. Interacts with GIMAP5. Interacts with BCL2L10/BCL-B. Interacts (when phosphorylated) with USP27X; the interaction leads to BCL2L11 deubiquitination and stabilization. Interacts with humanin; the interaction prevents BIM-induced apoptosis. In terms of assembly, does not interact with humanin. As to quaternary structure, interacts with BAX; the interaction may lead to BAX activation through conformational change. Does not interact with humanin. Interacts with BAX; the interaction may lead to BAX activation through conformational change. Post-translationally, phosphorylation at Ser-69 by MAPK1/MAPK3 leads to interaction with TRIM2 and polyubiquitination, followed by proteasomal degradation. Deubiquitination catalyzed by USP27X stabilizes the protein. Ubiquitination by TRIM2 following phosphorylation by MAPK1/MAPK3 leads to proteasomal degradation. Conversely, deubiquitination catalyzed by USP27X stabilizes the protein. As to expression, isoform BimEL, isoform BimL and isoform BimS are the predominant isoforms and are widely expressed with tissue-specific variation. Isoform Bim-gamma is most abundantly expressed in small intestine and colon, and in lower levels in spleen, prostate, testis, heart, liver and kidney.

It localises to the endomembrane system. Its subcellular location is the mitochondrion. Induces apoptosis and anoikis. Isoform BimL is more potent than isoform BimEL. Isoform Bim-alpha1, isoform Bim-alpha2 and isoform Bim-alpha3 induce apoptosis, although less potent than isoform BimEL, isoform BimL and isoform BimS. Isoform Bim-gamma induces apoptosis. Isoform Bim-alpha3 induces apoptosis possibly through a caspase-mediated pathway. Isoform BimAC and isoform BimABC lack the ability to induce apoptosis. The sequence is that of Bcl-2-like protein 11 (BCL2L11) from Homo sapiens (Human).